Consider the following 226-residue polypeptide: 3-dehydroquinate dehydratase (226 aa).

Residues 33 to 35 (ELR) and Arg65 each bind 3-dehydroquinate. His120 (proton donor/acceptor) is an active-site residue. Catalysis depends on Lys147, which acts as the Schiff-base intermediate with substrate. 3-dehydroquinate-binding residues include Arg186, Ser205, and Gln209.

It belongs to the type-I 3-dehydroquinase family. In terms of assembly, homodimer.

It catalyses the reaction 3-dehydroquinate = 3-dehydroshikimate + H2O. It functions in the pathway metabolic intermediate biosynthesis; chorismate biosynthesis; chorismate from D-erythrose 4-phosphate and phosphoenolpyruvate: step 3/7. Its function is as follows. Involved in the third step of the chorismate pathway, which leads to the biosynthesis of aromatic amino acids. Catalyzes the cis-dehydration of 3-dehydroquinate (DHQ) and introduces the first double bond of the aromatic ring to yield 3-dehydroshikimate. The polypeptide is 3-dehydroquinate dehydratase (Thermodesulfovibrio yellowstonii (strain ATCC 51303 / DSM 11347 / YP87)).